A 365-amino-acid chain; its full sequence is Aminomethyltransferase (365 aa).

This sequence belongs to the GcvT family. As to quaternary structure, the glycine cleavage system is composed of four proteins: P, T, L and H.

The enzyme catalyses N(6)-[(R)-S(8)-aminomethyldihydrolipoyl]-L-lysyl-[protein] + (6S)-5,6,7,8-tetrahydrofolate = N(6)-[(R)-dihydrolipoyl]-L-lysyl-[protein] + (6R)-5,10-methylene-5,6,7,8-tetrahydrofolate + NH4(+). In terms of biological role, the glycine cleavage system catalyzes the degradation of glycine. The chain is Aminomethyltransferase from Chlorobaculum tepidum (strain ATCC 49652 / DSM 12025 / NBRC 103806 / TLS) (Chlorobium tepidum).